Consider the following 761-residue polypeptide: Zinc finger protein 711 (761 aa).

Glycyl lysine isopeptide (Lys-Gly) (interchain with G-Cter in SUMO2) cross-links involve residues Lys-224, Lys-235, and Lys-296. 5 consecutive C2H2-type zinc fingers follow at residues 383–408, 414–436, 476–499, 505–527, and 533–556; these read YPCHICTKKFKSRGFLKRHMKNHPDH, YQCTDCDFTTNKKVSFHNHLESH, HKCKYCDYETAEQGLLNRHLLAVH, HVCVECGKGFRHPSELKKHMRTH, and YQCQYCAFRCADQSNLKTHIKSKH. The C2H2-type 6; atypical zinc-finger motif lies at 562–584; sequence YKCEHCPQAFGDERELQRHLDLF. Positions 564, 567, and 580 each coordinate Zn(2+). C2H2-type zinc fingers lie at residues 590-613, 619-641, 647-670, 676-698, 704-727, and 733-755; these read HQCPHCDHKSTNSSDLKRHIISVH, HKCEVCDKGFHRPSELKKHSDIH, HQCRHCDFKTSDPFILSGHILSVH, LKCKRCKRGFRQQNELKKHMKTH, YQCEYCEYSTTDASGFKRHVISIH, and HRCEFCKKGFRRPSEKKQHIMRH.

It belongs to the krueppel C2H2-type zinc-finger protein family. As to quaternary structure, interacts with PHF8.

It is found in the nucleus. Transcription regulator required for brain development. Probably acts as a transcription factor that binds to the promoter of target genes and recruits PHF8 histone demethylase, leading to activated expression of genes involved in neuron development, such as KDM5C. May compete with transcription factor ARX for activation of expression of KDM5C. This chain is Zinc finger protein 711 (Znf711), found in Mus musculus (Mouse).